A 231-amino-acid chain; its full sequence is Probable GTP-binding protein EngB (231 aa).

The 181-residue stretch at 51–231 (DLSEIAFAGR…RAQLAALASP (181 aa)) folds into the EngB-type G domain. GTP-binding positions include 59–66 (GRSNVGKS), 86–90 (GRTQE), 109–112 (DLPG), 176–179 (TKAD), and 210–212 (TSS). Mg(2+)-binding residues include Ser-66 and Thr-88.

This sequence belongs to the TRAFAC class TrmE-Era-EngA-EngB-Septin-like GTPase superfamily. EngB GTPase family. The cofactor is Mg(2+).

Necessary for normal cell division and for the maintenance of normal septation. The sequence is that of Probable GTP-binding protein EngB from Rhodospirillum rubrum (strain ATCC 11170 / ATH 1.1.1 / DSM 467 / LMG 4362 / NCIMB 8255 / S1).